The primary structure comprises 416 residues: Chaperone protein dnaJ A6 (416 aa).

The region spanning 12–73 (KYYEVLGVPK…EKRDIYDQYG (62 aa)) is the J domain. The segment at 133–217 (GSMKKLSLSR…CRASKVIQEK (85 aa)) adopts a CR-type zinc-finger fold. Cysteine 146, cysteine 149, cysteine 162, cysteine 165, cysteine 189, cysteine 192, cysteine 205, and cysteine 208 together coordinate Zn(2+). 3 CXXCXGXG motif repeats span residues 146 to 153 (CPKCKGKG), 162 to 169 (CYGCHGVG), and 189 to 196 (CPECRGSG). Positions 380 to 399 (HDVNIEEEMRRKQYQRKQEA) are enriched in basic and acidic residues. The tract at residues 380–416 (HDVNIEEEMRRKQYQRKQEAYDEDEEEDAPRVQCAQQ) is disordered.

The protein belongs to the DnaJ family. Interacts with ZFP1.

The protein resides in the nucleus. The protein localises to the cytoplasm. In terms of biological role, involved in disease resistance. Acts as a negative regulator of innate immunity to the rice blast fungus (Magnaporthe oryzae). Acts as a negative regulator of the pathogen-associated molecular pattern (PAMP)-triggered immunity (PTI) response through the inhibition of reactive oxygen species (ROS) accumulation and expression of defense-related genes. May function via the ubiquitin-proteasome degradation pathway. This is Chaperone protein dnaJ A6 from Oryza sativa subsp. japonica (Rice).